We begin with the raw amino-acid sequence, 336 residues long: Probable allantoicase (336 aa).

The protein belongs to the allantoicase family.

It catalyses the reaction allantoate + H2O = (S)-ureidoglycolate + urea. Its pathway is nitrogen metabolism; (S)-allantoin degradation; (S)-ureidoglycolate from allantoate (aminidohydrolase route): step 1/1. The chain is Probable allantoicase from Ralstonia nicotianae (strain ATCC BAA-1114 / GMI1000) (Ralstonia solanacearum).